The sequence spans 128 residues: Glycine cleavage system H protein (128 aa).

One can recognise a Lipoyl-binding domain in the interval 25-107 (TVRVGITDFA…YEGGWLFEIT (83 aa)). K66 is modified (N6-lipoyllysine).

Belongs to the GcvH family. The glycine cleavage system is composed of four proteins: P, T, L and H. It depends on (R)-lipoate as a cofactor.

The glycine cleavage system catalyzes the degradation of glycine. The H protein shuttles the methylamine group of glycine from the P protein to the T protein. The chain is Glycine cleavage system H protein from Micrococcus luteus (strain ATCC 4698 / DSM 20030 / JCM 1464 / CCM 169 / CCUG 5858 / IAM 1056 / NBRC 3333 / NCIMB 9278 / NCTC 2665 / VKM Ac-2230) (Micrococcus lysodeikticus).